Consider the following 397-residue polypeptide: Ribosomal RNA large subunit methyltransferase I (397 aa).

One can recognise a PUA domain in the interval serine 2–arginine 81.

The protein belongs to the methyltransferase superfamily. RlmI family.

It is found in the cytoplasm. The catalysed reaction is cytidine(1962) in 23S rRNA + S-adenosyl-L-methionine = 5-methylcytidine(1962) in 23S rRNA + S-adenosyl-L-homocysteine + H(+). Functionally, specifically methylates the cytosine at position 1962 (m5C1962) of 23S rRNA. The sequence is that of Ribosomal RNA large subunit methyltransferase I from Alteromonas mediterranea (strain DSM 17117 / CIP 110805 / LMG 28347 / Deep ecotype).